Reading from the N-terminus, the 378-residue chain is Glutamate 5-kinase (378 aa).

Residue lysine 14 participates in ATP binding. Residues serine 54, aspartate 141, and asparagine 153 each coordinate substrate. 173–174 (SD) is an ATP binding site. One can recognise a PUA domain in the interval 279–356 (AGRLTVDAGA…DEISEILGYD (78 aa)).

It belongs to the glutamate 5-kinase family.

Its subcellular location is the cytoplasm. The enzyme catalyses L-glutamate + ATP = L-glutamyl 5-phosphate + ADP. It functions in the pathway amino-acid biosynthesis; L-proline biosynthesis; L-glutamate 5-semialdehyde from L-glutamate: step 1/2. In terms of biological role, catalyzes the transfer of a phosphate group to glutamate to form L-glutamate 5-phosphate. The polypeptide is Glutamate 5-kinase (Brucella anthropi (strain ATCC 49188 / DSM 6882 / CCUG 24695 / JCM 21032 / LMG 3331 / NBRC 15819 / NCTC 12168 / Alc 37) (Ochrobactrum anthropi)).